Reading from the N-terminus, the 124-residue chain is Large ribosomal subunit protein uL18 (124 aa).

It belongs to the universal ribosomal protein uL18 family. As to quaternary structure, part of the 50S ribosomal subunit; part of the 5S rRNA/L5/L18/L25 subcomplex. Contacts the 5S and 23S rRNAs.

In terms of biological role, this is one of the proteins that bind and probably mediate the attachment of the 5S RNA into the large ribosomal subunit, where it forms part of the central protuberance. The polypeptide is Large ribosomal subunit protein uL18 (Orientia tsutsugamushi (strain Boryong) (Rickettsia tsutsugamushi)).